A 161-amino-acid polypeptide reads, in one-letter code: Nucleotide-binding protein RC1_3464 (161 aa).

Belongs to the YajQ family.

In terms of biological role, nucleotide-binding protein. The polypeptide is Nucleotide-binding protein RC1_3464 (Rhodospirillum centenum (strain ATCC 51521 / SW)).